Here is a 239-residue protein sequence, read N- to C-terminus: Ribonuclease 3 (239 aa).

Residues Arg12–Gly137 enclose the RNase III domain. Glu50 is a binding site for Mg(2+). Residue Asp54 is part of the active site. Residues Asp123 and Glu126 each contribute to the Mg(2+) site. Residue Glu126 is part of the active site. Positions Asp162–Ile231 constitute a DRBM domain.

This sequence belongs to the ribonuclease III family. In terms of assembly, homodimer. Mg(2+) serves as cofactor.

It localises to the cytoplasm. It catalyses the reaction Endonucleolytic cleavage to 5'-phosphomonoester.. Functionally, digests double-stranded RNA. Involved in the processing of primary rRNA transcript to yield the immediate precursors to the large and small rRNAs (23S and 16S). Processes some mRNAs, and tRNAs when they are encoded in the rRNA operon. Processes pre-crRNA and tracrRNA of type II CRISPR loci if present in the organism. This is Ribonuclease 3 from Rhizobium rhizogenes (strain K84 / ATCC BAA-868) (Agrobacterium radiobacter).